Here is a 399-residue protein sequence, read N- to C-terminus: Nicotinate phosphoribosyltransferase (399 aa).

The residue at position 217 (His217) is a Phosphohistidine; by autocatalysis.

Belongs to the NAPRTase family. Transiently phosphorylated on a His residue during the reaction cycle. Phosphorylation strongly increases the affinity for substrates and increases the rate of nicotinate D-ribonucleotide production. Dephosphorylation regenerates the low-affinity form of the enzyme, leading to product release.

It catalyses the reaction nicotinate + 5-phospho-alpha-D-ribose 1-diphosphate + ATP + H2O = nicotinate beta-D-ribonucleotide + ADP + phosphate + diphosphate. The protein operates within cofactor biosynthesis; NAD(+) biosynthesis; nicotinate D-ribonucleotide from nicotinate: step 1/1. Its function is as follows. Catalyzes the synthesis of beta-nicotinate D-ribonucleotide from nicotinate and 5-phospho-D-ribose 1-phosphate at the expense of ATP. This is Nicotinate phosphoribosyltransferase from Burkholderia mallei (strain ATCC 23344).